Consider the following 537-residue polypeptide: MGCIKSKEDKGPSIKYRTEPKPDPGSQYGADPTQATQSPGIKGPAPNFNSHSMTPFGGSSGITPFGGASSIFSPTPVPYPGGLTGGVTVFVALYDYEARTTEDLSFRKGERFQIINNTEGDWWEARSIATGKTGYIPSNYVAPADSIQAEEWYFGKMGRKDAERLLLNPGNQRGTFLVRESETTKGAYSLSIRDWDEVRGDNVKHYKIRKLDNGGYYITTRAQFESLQKLVKHYSEHADGLCYRLTTVCPSVKPQTQGLAKDAWEIPRESLRLDVKLGQGCFGEVWIGTWNGTTKVAIKTLKPGTMMPEAFLQEAQIMKKLRHDKLVPLYAVVSEEPIYIVTEYMIKGSLLDFLKEGNGKYLKLPQLVDMAAQIADGMAYIERMNYIHRDLRAANILVGDNLVCKIADFGLARLIEDNEYTARQGAKFPIKWTAPEAALYGRFTIKSDVWSFGILLTELVAKGRVPYPGMVNREVLEQVERGYRMPCPQRCPESLHELMKLCWKKDPDERPTFEYIQSFLEDYFTATEPQYQPGDNL.

Over residues M1–P22 the composition is skewed to basic and acidic residues. The disordered stretch occupies residues M1–S60. G2 is lipidated: N-myristoyl glycine. C3 carries the S-palmitoyl cysteine; in membrane form lipid modification. Positions G85 to S146 constitute an SH3 domain. The SH2 domain occupies W152–C249. A Protein kinase domain is found at L271–F524. Residues L277 to V285 and K299 each bind ATP. D390 acts as the Proton acceptor in catalysis. Y420 is modified (phosphotyrosine; by autocatalysis). Y531 is modified (phosphotyrosine; by CSK).

Belongs to the protein kinase superfamily. Tyr protein kinase family. SRC subfamily. Post-translationally, autophosphorylated at Tyr-420 inducing activation. Palmitoylation at Cys-3 promotes membrane localization.

The protein localises to the cell membrane. The protein resides in the cytoplasm. Its subcellular location is the cytoskeleton. It localises to the microtubule organizing center. It is found in the centrosome. The protein localises to the cytosol. The protein resides in the cell junction. The catalysed reaction is L-tyrosyl-[protein] + ATP = O-phospho-L-tyrosyl-[protein] + ADP + H(+). Its function is as follows. Non-receptor protein tyrosine kinase that is involved in the regulation of cell growth and survival, apoptosis, cell-cell adhesion, cytoskeleton remodeling, differentiation, G2/M progression and cytokinesis. The protein is Tyrosine-protein kinase Yes (yes1) of Xenopus laevis (African clawed frog).